The sequence spans 91 residues: Pyruvate kinase (91 aa).

Residue R48 participates in substrate binding. The K(+) site is built by N50, S52, D82, and T83. N50–H53 contributes to the ATP binding site. Residue R89 participates in ATP binding.

It belongs to the pyruvate kinase family. Homotetramer. It depends on Mg(2+) as a cofactor. K(+) is required as a cofactor.

The enzyme catalyses pyruvate + ATP = phosphoenolpyruvate + ADP + H(+). Its pathway is carbohydrate degradation; glycolysis; pyruvate from D-glyceraldehyde 3-phosphate: step 5/5. This chain is Pyruvate kinase, found in Leishmania braziliensis.